The sequence spans 429 residues: Probable proton-coupled zinc antiporter SLC30A4 (429 aa).

Topologically, residues 1–113 (MAGSGAWKRL…LLKQRKVKTR (113 aa)) are cytoplasmic. A helical membrane pass occupies residues 114–134 (LTIAAVLYLLFMIGELVGGYI). Residues 135-143 (ANSLAIMTD) are Lumenal-facing. Residues 144–164 (ALHMLTDLSAIILTLLALWLS) form a helical membrane-spanning segment. Zn(2+) contacts are provided by H146 and D150. At 165-178 (SKSPTKRFTFGFHR) the chain is on the cytoplasmic side. A helical membrane pass occupies residues 179–199 (LEVLSAMISVLLVYILMGFLL). The Lumenal portion of the chain corresponds to 200–216 (YEAVQRTIHMKYEINGD). The chain crosses the membrane as a helical span at residues 217–237 (IMLITAAIGVAVNVIMGFLLN). The Cytoplasmic segment spans residues 238–274 (QSGHHHAHSHSLPSNSPTTGPRCGHNQGQDSLAVRAA). The tract at residues 240 to 264 (GHHHAHSHSLPSNSPTTGPRCGHNQ) is zinc binding. Residues 275 to 295 (FVHALGDLVQSVGVLIAAYII) form a helical membrane-spanning segment. H277 and D281 together coordinate Zn(2+). Over 296–310 (RFKPEYRIADPICTY) the chain is Lumenal. The helical transmembrane segment at 311-331 (VFSLLVAFTTFRIIWDTVVII) threads the bilayer. Residues 332–429 (LEGVPSHLNV…TCANCQSSSS (98 aa)) are Cytoplasmic-facing.

It belongs to the cation diffusion facilitator (CDF) transporter (TC 2.A.4) family. SLC30A subfamily. In terms of assembly, homodimerization could regulate efficiency for zinc transport. Interacts with TMEM163.

Its subcellular location is the endosome membrane. It is found in the late endosome membrane. The protein localises to the lysosome membrane. It carries out the reaction Zn(2+)(in) + 2 H(+)(out) = Zn(2+)(out) + 2 H(+)(in). In terms of biological role, probable proton-coupled zinc ion antiporter mediating zinc import from cytoplasm potentially into the endocytic compartment. Controls zinc deposition in milk. This chain is Probable proton-coupled zinc antiporter SLC30A4, found in Bos taurus (Bovine).